Reading from the N-terminus, the 40-residue chain is Muscarinic m1-toxin3 (40 aa).

C3 and C24 form a disulfide bridge.

Belongs to the three-finger toxin family. Short-chain subfamily. Aminergic toxin sub-subfamily. Monomer. Post-translationally, contains 4 disulfide bonds. Expressed by the venom gland.

The protein localises to the secreted. In terms of biological role, binds irreversibly and specifically to M1 (CHRM1) muscarinic acetylcholine receptors, blocking further binding of antagonists and preventing the action of agonists. The sequence is that of Muscarinic m1-toxin3 from Dendroaspis angusticeps (Eastern green mamba).